The primary structure comprises 61 residues: Ferredoxin-2 (61 aa).

2 consecutive 4Fe-4S ferredoxin-type domains span residues 2 to 27 (HRIT…SAGD) and 28 to 61 (EIYI…IIKV). The [4Fe-4S] cluster site is built by C8, C11, C14, C18, C37, C40, C49, and C53.

Requires [4Fe-4S] cluster as cofactor.

In terms of biological role, ferredoxins are iron-sulfur proteins that transfer electrons in a wide variety of metabolic reactions. The polypeptide is Ferredoxin-2 (Chlorobium limicola).